The primary structure comprises 445 residues: Acetylcholine-gated chloride channel subunit acc-2 (445 aa).

Residues 1–26 (MIFTLLSTLPVLIITTELDYSELVHS) form the signal peptide. The Extracellular segment spans residues 27 to 258 (AELVSSSSYI…LHVTIIFERR (232 aa)). N-linked (GlcNAc...) asparagine glycosylation is found at Asn-46, Asn-59, Asn-121, and Asn-162. A disulfide bond links Cys-177 and Cys-191. N-linked (GlcNAc...) asparagine glycosylation is present at Asn-218. A helical membrane pass occupies residues 259–279 (FIWYFMQAYLPTYLTIFISWI). At 280-286 (SFSLGSR) the chain is on the cytoplasmic side. The chain crosses the membrane as a helical span at residues 287-307 (AIPARTMLGVNSLLAIVFSFG). Topologically, residues 308–326 (NIMRNLPRVSYIKGIDVWM) are extracellular. Residues 327–347 (LVSMTFIFCSLLELAIVGFMV) traverse the membrane as a helical segment. Over 348-407 (RDETVAKKKQQKKISGNISREESPHGIISERRFMFPPGCSESSKSLSSCTSGWTPERIDS) the chain is Cytoplasmic. A helical membrane pass occupies residues 408 to 428 (ISSVMFPFSFFVFNIIYWFYY). Residues 429-445 (IHRKEIIKQNLINRVDG) are Extracellular-facing.

The protein belongs to the ligand-gated ion channel (TC 1.A.9) family. As to quaternary structure, homopentamer (in vitro). May interact with either acc-3 or acc-4; the interactions do not result in significant heteropentameric ion channel activity. Expressed in RIA, RIG, PHA and AIZ glutamatergic neurons, URX and RIH cholinergic neurons, and in male-specific MCM neurons.

The protein localises to the cell membrane. Functionally, acetylcholine-gated chloride channel subunit. Currents in channels are triggered in response to acetylcholine. Channel properties may be modulated by the formation of homomeric and heteromeric channels. This is Acetylcholine-gated chloride channel subunit acc-2 from Caenorhabditis elegans.